We begin with the raw amino-acid sequence, 219 residues long: Membrin-12 (219 aa).

The residue at position 2 (Ala-2) is an N-acetylalanine. Residues 2–197 (ASGTVGGLSE…LIERRNRVDT (196 aa)) are Cytoplasmic-facing. A helical; Anchor for type IV membrane protein membrane pass occupies residues 198–215 (WIKYAGMIATLVILYLFI). Topologically, residues 216–219 (RWTR) are vesicular.

It belongs to the GOSR2 family.

It localises to the golgi apparatus membrane. Involved in transport of proteins from the cis/medial-Golgi to the trans-Golgi network. This Arabidopsis thaliana (Mouse-ear cress) protein is Membrin-12 (MEMB12).